The chain runs to 65 residues: Cold shock-like protein CspB (65 aa).

Residues 3–62 (GKVKWFNNEKGFGFIEMEGSEDVFVHFSAIQSDGYKALEEGQEVSFDITEGNRGPQAANV) enclose the CSD domain.

In terms of assembly, homodimer.

Its subcellular location is the cytoplasm. The polypeptide is Cold shock-like protein CspB (cspB) (Bacillus cereus).